A 308-amino-acid polypeptide reads, in one-letter code: GTPase Era (308 aa).

The region spanning R7 to E181 is the Era-type G domain. A G1 region spans residues G15 to S22. Residue G15–S22 coordinates GTP. A G2 region spans residues Q41–N45. Residues D62–G65 form a G3 region. Residues D62–I66 and N130–D133 each bind GTP. The interval N130–D133 is G4. Positions A160–A162 are G5. A KH type-2 domain is found at L212 to E290.

It belongs to the TRAFAC class TrmE-Era-EngA-EngB-Septin-like GTPase superfamily. Era GTPase family. Monomer.

The protein resides in the cytoplasm. Its subcellular location is the cell inner membrane. Functionally, an essential GTPase that binds both GDP and GTP, with rapid nucleotide exchange. Plays a role in 16S rRNA processing and 30S ribosomal subunit biogenesis and possibly also in cell cycle regulation and energy metabolism. The sequence is that of GTPase Era from Nitratidesulfovibrio vulgaris (strain DP4) (Desulfovibrio vulgaris).